The primary structure comprises 189 residues: Thermostable direct hemolysin 1 (189 aa).

The signal sequence occupies residues 1-24 (MKHQYFAKKSFLFISMLAAFKTSA). Cysteines 175 and 185 form a disulfide.

It belongs to the TDH hemolysin family. Homodimer.

Bacterial hemolysins are exotoxins that attack blood cell membranes and cause cell rupture by mechanisms not clearly defined. The sequence is that of Thermostable direct hemolysin 1 (tdh1) from Vibrio parahaemolyticus serotype O3:K6 (strain RIMD 2210633).